The following is a 1014-amino-acid chain: MICAL-like protein 2 (1014 aa).

Positions 1-107 constitute a Calponin-homology (CH) domain; sequence MAAIKALQEW…YVSQYYNYFH (107 aa). Residues 1 to 261 form a forms an intramolecular interaction with the C-terminal coiled coil domain keeping the protein in a closed conformation region; it reads MAAIKALQEW…KLSNLASRQP (261 aa). Phosphoserine occurs at positions 110, 144, and 154. The tract at residues 114 to 181 is disordered; the sequence is GMAGMKRPSS…PSPKAAPGTV (68 aa). The region spanning 187–249 is the LIM zinc-binding domain; that stretch reads SICGVCGKHV…THHSSEAVSV (63 aa). Serine 250 is modified (phosphoserine). The segment at 262 to 394 is necessary and sufficient for interaction with actinins; sequence GGGIADTRPI…QGQAASKGVK (133 aa). The segment at 262–810 is mediates targeting to the cell plasma membrane; it reads GGGIADTRPI…QDDQTRSCKE (549 aa). Disordered stretches follow at residues 311 to 450 and 609 to 780; these read LTPP…SRVP and TLPK…RRKK. Positions 332–355 are enriched in polar residues; that stretch reads STVTTTSANSKATTHVTNSSPVGW. Over residues 356–368 the composition is skewed to low complexity; sequence SSSAQSSTGTSGS. The segment covering 384 to 398 has biased composition (polar residues); sequence PQGQAASKGVKTQLN. Low complexity-rich tracts occupy residues 399-419 and 438-447; these read SSTDSSSTAPTPAWTSSSSRT and PASSSSSHAS. 2 stretches are compositionally biased toward polar residues: residues 624–633 and 646–656; these read LSHSTTQAFS and VGSTSWTSVSL. 2 stretches are compositionally biased toward basic and acidic residues: residues 701–711 and 720–737; these read EGWRARLKPVD and LEQKEPVLAEPRAGDTPR. Positions 747–758 are enriched in polar residues; that stretch reads IHITLTPIQQKR. Threonine 759 is modified (phosphothreonine). 2 positions are modified to phosphoserine: serine 773 and serine 837. Positions 811–918 are forms an intramolecular interaction with the N-terminal Calponin-homology and LIM zinc-binding domains-containing region keeping the protein in a closed conformation; the sequence is KTATWGTRES…LMYKSKDQCL (108 aa). The bMERB domain occupies 838–985; it reads PVRLHPNYIS…EQEEDQMLES (148 aa). Positions 845 to 885 form a coiled coil; that stretch reads YISQEELQRQLQDIERQLDALELRGVELEKRLRAAEGDASE. Residues 918-1014 are mediates interaction with RAB13 and is required for transition from the closed to the open conformation; that stretch reads LEERQLDLQG…WSSKSKSGQT (97 aa).

In terms of assembly, interacts with RAB13 (GTP-bound form); competes with RAB8A and is involved in tight junctions assembly. Interacts with RAB8A; competes with RAB13 and is involved in E-cadherin endocytic recycling. Interacts with RAB8B. Interacts (preferentially in opened conformation) with ACTN1 and ACTN4; stimulated by RAB13 activation. Interacts (via calponin-homology (CH) domain) with the filamins FLNA, FLNB and FLNC (via actin-binding domain).

Its subcellular location is the cell membrane. The protein localises to the cell junction. It localises to the tight junction. The protein resides in the recycling endosome. It is found in the cell projection. Its subcellular location is the neuron projection. The protein localises to the cytoplasm. It localises to the cytoskeleton. In terms of biological role, effector of small Rab GTPases which is involved in junctional complexes assembly through the regulation of cell adhesion molecules transport to the plasma membrane and actin cytoskeleton reorganization. Regulates the endocytic recycling of occludins, claudins and E-cadherin to the plasma membrane and may thereby regulate the establishment of tight junctions and adherens junctions. In parallel, may regulate actin cytoskeleton reorganization directly through interaction with F-actin or indirectly through actinins and filamins. Most probably involved in the processes of epithelial cell differentiation, cell spreading and neurite outgrowth. Undergoes liquid-liquid phase separation to form tubular recycling endosomes. Plays 2 sequential roles in the biogenesis of tubular recycling endosomes: first organizes phase separation and then the closed form formed by interaction with RAB8A promotes endosomal tubulation. The polypeptide is MICAL-like protein 2 (Micall2) (Rattus norvegicus (Rat)).